A 373-amino-acid chain; its full sequence is 4-hydroxy-3-methylbut-2-en-1-yl diphosphate synthase (flavodoxin) (373 aa).

Residues C270, C273, C305, and E312 each coordinate [4Fe-4S] cluster.

This sequence belongs to the IspG family. It depends on [4Fe-4S] cluster as a cofactor.

It catalyses the reaction (2E)-4-hydroxy-3-methylbut-2-enyl diphosphate + oxidized [flavodoxin] + H2O + 2 H(+) = 2-C-methyl-D-erythritol 2,4-cyclic diphosphate + reduced [flavodoxin]. Its pathway is isoprenoid biosynthesis; isopentenyl diphosphate biosynthesis via DXP pathway; isopentenyl diphosphate from 1-deoxy-D-xylulose 5-phosphate: step 5/6. Converts 2C-methyl-D-erythritol 2,4-cyclodiphosphate (ME-2,4cPP) into 1-hydroxy-2-methyl-2-(E)-butenyl 4-diphosphate. The chain is 4-hydroxy-3-methylbut-2-en-1-yl diphosphate synthase (flavodoxin) from Erwinia tasmaniensis (strain DSM 17950 / CFBP 7177 / CIP 109463 / NCPPB 4357 / Et1/99).